The sequence spans 576 residues: Gamma-aminobutyric acid receptor subunit beta (576 aa).

Residues 1–29 (MSDSMLYQTLQTCLPKSRLITLWLAFTLA) form the signal peptide. Residues 30-268 (MLIQEPRRHA…IQFVRSMGYY (239 aa)) are Extracellular-facing. Asparagine 56 carries N-linked (GlcNAc...) asparagine glycosylation. A disulfide bridge links cysteine 183 with cysteine 197. Residue asparagine 251 is glycosylated (N-linked (GlcNAc...) asparagine). Transmembrane regions (helical) follow at residues 269–289 (LIQI…SFWL), 298–320 (VALG…AALP), and 330–350 (VYLG…ATVG). Residues 351-540 (YMAKRIQMRK…TPSDIDKYSR (190 aa)) lie on the Cytoplasmic side of the membrane. Disordered stretches follow at residues 372-418 (QKKQ…QTVS) and 452-507 (HDPK…GDAE). Residues 398 to 412 (HGHGHGHHSHGHPHV) show a composition bias toward basic residues. Over residues 475 to 490 (PVGPHGPGPQGPPGGP) the composition is skewed to pro residues. Positions 491–501 (PAGGGGGGAPP) are enriched in gly residues. The helical transmembrane segment at 541-561 (IVFPVCFVCFNLMYWIIYLHV) threads the bilayer.

Belongs to the ligand-gated ion channel (TC 1.A.9) family. Gamma-aminobutyric acid receptor (TC 1.A.9.5) subfamily. As to quaternary structure, homomultimer.

Its subcellular location is the postsynaptic cell membrane. The protein resides in the cell membrane. In terms of biological role, GABA, an inhibitory neurotransmitter, mediates neuronal inhibition by binding to the GABA receptor and opening an integral chloride channel. The polypeptide is Gamma-aminobutyric acid receptor subunit beta (Musca domestica (House fly)).